The chain runs to 432 residues: Glutamate-1-semialdehyde 2,1-aminomutase 2 (432 aa).

Position 268 is an N6-(pyridoxal phosphate)lysine (K268).

The protein belongs to the class-III pyridoxal-phosphate-dependent aminotransferase family. HemL subfamily. In terms of assembly, homodimer. Pyridoxal 5'-phosphate serves as cofactor.

It is found in the cytoplasm. The enzyme catalyses (S)-4-amino-5-oxopentanoate = 5-aminolevulinate. It participates in porphyrin-containing compound metabolism; protoporphyrin-IX biosynthesis; 5-aminolevulinate from L-glutamyl-tRNA(Glu): step 2/2. This Listeria monocytogenes serotype 4b (strain CLIP80459) protein is Glutamate-1-semialdehyde 2,1-aminomutase 2.